We begin with the raw amino-acid sequence, 578 residues long: Pentatricopeptide repeat-containing protein At4g22760 (578 aa).

PPR repeat units follow at residues 68 to 102, 103 to 137, 138 to 168, 169 to 203, 204 to 230, 231 to 261, 262 to 292, 293 to 327, 330 to 364, 365 to 395, 396 to 430, 431 to 465, and 466 to 496; these read DSFS…GIPP, SSHA…GLCG, CVYV…IAEK, NTVS…DAVS, WNLI…MPLK, SPAS…MPQK, NGVS…MSKK, DKLV…NSYI, DEIT…GIKI, DDLL…LNKK, DTVS…KIPP, NVVT…NLEP, and SADH…MPMQ. Residues 501-576 form a type E motif region; it reads VWGALLLASG…TLGCSWVEGS (76 aa).

The protein belongs to the PPR family. PCMP-E subfamily.

In Arabidopsis thaliana (Mouse-ear cress), this protein is Pentatricopeptide repeat-containing protein At4g22760 (PCMP-E6).